We begin with the raw amino-acid sequence, 339 residues long: MLATPTLSNFDKPSLPSSEGGDPALAARLQPLYSRFLTDLDLQPEYRRHESEKLMEEVLKFAKSTGVPHDLNSHSYQSLMVGYTYADNCLPYHDIEVKVYVAIYTWLATICDDAEALGIIDDVQLFEQRFILGEEQPTVLLRAFADQLKLTYKLYHPLVANLILCSSLNLLTSTSLVARKGIKEKGDHPSKGGNYFAWYIRERDGVGEAYSWFTFPKRQFPNLDIPIEAIEDMTRFIAYLNDVLSFYKESLAGETHNYINHTAAYEGVDSDAALHKTAQDTIDCARRIESVLAGKGEYEKAWRLHASGYLQMHVQRGRYRLIEVGVGDAPDVHEVIKKI.

Residues 1–17 (MLATPTLSNFDKPSLPS) show a composition bias toward polar residues. Residues 1–21 (MLATPTLSNFDKPSLPSSEGG) are disordered. Mg(2+) contacts are provided by Asp-112, Asn-241, Ser-245, and Glu-249. The NDXXSXXXE magnesium-binding motif signature appears at 241-249 (NDVLSFYKE).

Belongs to the trichodiene synthase family. Mg(2+) serves as cofactor. It depends on Mn(2+) as a cofactor.

It catalyses the reaction (2E,6E)-farnesyl diphosphate + H2O = (-)-longiborneol + diphosphate. The protein operates within mycotoxin biosynthesis. Functionally, terpene cyclase involved in the biosynthesis of culmorin, a tricyclic sesquiterpene diol reported to have antifungal activity and some phytotoxicity to wheat coleoptile tissue, contributing to Fusarium head blight disease. The terpene cyclase CLM1 is responsible for the cyclization of farnesyl diphosphate into the intermediate longiborneol. Longiborneol is then hydroxylated in a regio- and endo-stereoselective manner at position C-11 by the cytochrome P450 monooxygenase CLM2 to produce culmorin. Additional non-specific oxygenases are also able to hydroxylate longiborneol at other sites than C-11 leading to 3-hydroxylongiborneol, 5-hydroxylongiborneol, 12-hydroxylongiborneol and 15-hydroxylongiborneol. Moreover, another oxygenase capable of installing a C-11 exo-hydroxy group in longiborneol can also yield 11-epi-acetylculmorin. The production of these longiborneol derivatives is dwarfed by the high abundance of culmorin, suggesting that CLM2 displays superior enzymatic activity to the unidentified, possibly promiscuous, additional oxygenases. In Gibberella zeae (strain ATCC MYA-4620 / CBS 123657 / FGSC 9075 / NRRL 31084 / PH-1) (Wheat head blight fungus), this protein is Longiborneol synthase CLM1.